A 314-amino-acid polypeptide reads, in one-letter code: Large ribosomal subunit protein uL10 (314 aa).

The disordered stretch occupies residues 281–314; that stretch reads GSTQETPEEKKEEAKKEEKSPDESISEGLGALFQ. Residues 287-302 show a composition bias toward basic and acidic residues; sequence PEEKKEEAKKEEKSPD.

It belongs to the universal ribosomal protein uL10 family. Part of the 50S ribosomal subunit. Forms part of the ribosomal stalk which helps the ribosome interact with GTP-bound translation factors. Forms a heptameric L10(L12)2(L12)2(L12)2 complex, where L10 forms an elongated spine to which the L12 dimers bind in a sequential fashion.

In terms of biological role, forms part of the ribosomal stalk, playing a central role in the interaction of the ribosome with GTP-bound translation factors. This chain is Large ribosomal subunit protein uL10, found in Thermoplasma acidophilum (strain ATCC 25905 / DSM 1728 / JCM 9062 / NBRC 15155 / AMRC-C165).